Reading from the N-terminus, the 981-residue chain is Anoctamin-3 (981 aa).

Polar residues predominate over residues 1–22 (MVHHSGSIQSFKQQKGMNISKS). Positions 1–33 (MVHHSGSIQSFKQQKGMNISKSEITKETSLKPS) are disordered. Topologically, residues 1-403 (MVHHSGSIQS…LYFAWLGWYT (403 aa)) are cytoplasmic. A helical membrane pass occupies residues 404–424 (GMLIPAAIVGLCVFFYGLFTM). Residues asparagine 425, asparagine 448, and asparagine 455 are each glycosylated (N-linked (GlcNAc...) asparagine). The Extracellular portion of the chain corresponds to 425-469 (NNSQVSQEICKATEVFMCPLCDKNCSLQRLNDSCIYAKVTYLFDN). The helical transmembrane segment at 470–490 (GGTVFFAIFMAIWATVFLEFW) threads the bilayer. The Cytoplasmic portion of the chain corresponds to 491–550 (KRRRSILTYTWDLIEWEEEEETLRPQFEAKYYKMEIVNPITGKPEPHQPSSDKVTRLLVS). Residues 551-571 (VSGIFFMISLVITAVFGVVVY) traverse the membrane as a helical segment. Topologically, residues 572-592 (RLVVMEQFASFKWNFIKQYWQ) are extracellular. Residues 593-613 (FATSAAAVCINFIIIMLLNLA) traverse the membrane as a helical segment. Over 614 to 640 (YEKIAYLLTNLEYPRTESEWENSFALK) the chain is Cytoplasmic. The helical transmembrane segment at 641–661 (MFLFQFVNLNSSIFYIAFFLG) threads the bilayer. Topologically, residues 662-761 (RFVGHPGKYN…MDEYLEMVLQ (100 aa)) are extracellular. A helical membrane pass occupies residues 762-782 (FGFTTIFVAAFPLAPLLALLN). The Cytoplasmic portion of the chain corresponds to 783-810 (NIIEIRLDAYKFVTQWRRPLPARATDIG). A helical transmembrane segment spans residues 811–831 (IWLGILEGIGILAVITNAFVI). Residues 832-914 (AITSDYIPRF…QYWHILAARL (83 aa)) lie on the Extracellular side of the membrane. N-linked (GlcNAc...) asparagine glycosylation is present at asparagine 866. A helical transmembrane segment spans residues 915–935 (AFIIVFEHLVFGIKSFIAYLI). Topologically, residues 936 to 981 (PDVPKGLHDRIRREKYLVQEMMYEAELEHLQQQRRKSGQPVHHEWP) are cytoplasmic.

This sequence belongs to the anoctamin family. Interacts with KCNT1/Slack. As to expression, highly expressed in the forebrain striatum.

The protein resides in the cell membrane. The enzyme catalyses a 1,2-diacyl-sn-glycero-3-phosphocholine(in) = a 1,2-diacyl-sn-glycero-3-phosphocholine(out). It carries out the reaction a beta-D-galactosyl-(1&lt;-&gt;1')-N-acylsphing-4-enine(out) = a beta-D-galactosyl-(1&lt;-&gt;1')-N-acylsphing-4-enine(in). Its function is as follows. Has calcium-dependent phospholipid scramblase activity; scrambles phosphatidylcholine and galactosylceramide. Seems to act as potassium channel regulator and may inhibit pain signaling; can facilitate KCNT1/Slack channel activity by promoting its full single-channel conductance at very low sodium concentrations and by increasing its sodium sensitivity. Does not exhibit calcium-activated chloride channel (CaCC) activity. The chain is Anoctamin-3 (ANO3) from Homo sapiens (Human).